Consider the following 538-residue polypeptide: CTP synthase (538 aa).

The interval 1-270 is amidoligase domain; the sequence is MSRTKFIFVT…DEVVLKTMGM (270 aa). Serine 15 lines the CTP pocket. Position 15 (serine 15) interacts with UTP. 16–21 provides a ligand contact to ATP; the sequence is SLGKGV. Tyrosine 56 is a binding site for L-glutamine. Aspartate 73 is an ATP binding site. Mg(2+) contacts are provided by aspartate 73 and glutamate 143. Residues 150-152, 190-195, and lysine 226 each bind CTP; these read DIE and KTKPTQ. UTP-binding positions include 190–195 and lysine 226; that span reads KTKPTQ. The region spanning 295–537 is the Glutamine amidotransferase type-1 domain; the sequence is QIAVVGKYIS…IRASVKYSKK (243 aa). Glycine 357 serves as a coordination point for L-glutamine. Residue cysteine 384 is the Nucleophile; for glutamine hydrolysis of the active site. L-glutamine is bound by residues 385–388, glutamate 408, and arginine 465; that span reads LGMQ. Catalysis depends on residues histidine 510 and glutamate 512.

Belongs to the CTP synthase family. As to quaternary structure, homotetramer.

It carries out the reaction UTP + L-glutamine + ATP + H2O = CTP + L-glutamate + ADP + phosphate + 2 H(+). The enzyme catalyses L-glutamine + H2O = L-glutamate + NH4(+). The catalysed reaction is UTP + NH4(+) + ATP = CTP + ADP + phosphate + 2 H(+). Its pathway is pyrimidine metabolism; CTP biosynthesis via de novo pathway; CTP from UDP: step 2/2. Allosterically activated by GTP, when glutamine is the substrate; GTP has no effect on the reaction when ammonia is the substrate. The allosteric effector GTP functions by stabilizing the protein conformation that binds the tetrahedral intermediate(s) formed during glutamine hydrolysis. Inhibited by the product CTP, via allosteric rather than competitive inhibition. In terms of biological role, catalyzes the ATP-dependent amination of UTP to CTP with either L-glutamine or ammonia as the source of nitrogen. Regulates intracellular CTP levels through interactions with the four ribonucleotide triphosphates. In Leptospira interrogans serogroup Icterohaemorrhagiae serovar copenhageni (strain Fiocruz L1-130), this protein is CTP synthase.